The primary structure comprises 351 residues: Protein Wnt-4 (351 aa).

An N-terminal signal peptide occupies residues Met-1–Ala-22. N-linked (GlcNAc...) asparagine glycosylation is found at Asn-21 and Asn-88. 11 disulfides stabilise this stretch: Cys-78-Cys-89, Cys-128-Cys-136, Cys-138-Cys-155, Cys-206-Cys-220, Cys-208-Cys-215, Cys-280-Cys-311, Cys-296-Cys-306, Cys-310-Cys-350, Cys-326-Cys-341, Cys-328-Cys-338, and Cys-333-Cys-334. Residue Ser-212 is the site of O-palmitoleoyl serine; by PORCN attachment. Asn-297 carries N-linked (GlcNAc...) asparagine glycosylation.

It belongs to the Wnt family. As to quaternary structure, interacts with CPZ. In terms of processing, palmitoleoylation is required for efficient binding to frizzled receptors. Depalmitoleoylation leads to Wnt signaling pathway inhibition. In terms of tissue distribution, predominantly expressed in the diencephalon neuromere D2.

Its subcellular location is the secreted. The protein localises to the extracellular space. It localises to the extracellular matrix. In terms of biological role, ligand for members of the frizzled family of seven transmembrane receptors. Plays an important role in embryonic development. This is Protein Wnt-4 (WNT4) from Gallus gallus (Chicken).